Here is a 276-residue protein sequence, read N- to C-terminus: Beta-lactamase OXA-1 (276 aa).

Residues 1–25 (MKNTIHINFAIFLIIANIIYSSASA) form the signal peptide. S71 acts as the Acyl-ester intermediate in catalysis. Positions 71, 74, 118, 216, and 218 each coordinate a beta-lactam. N6-carboxylysine is present on K74.

The protein belongs to the class-D beta-lactamase family. Monomer.

It is found in the periplasm. It carries out the reaction a beta-lactam + H2O = a substituted beta-amino acid. Inhibited by penicillin sulfones. Only weakly inhibited by clavulanic acid and sulbactam. Functionally, class D beta-lactamase which confers resistance to the beta-lactam antibiotics, including amoxicillin and ticarcillin. Acts via hydrolysis of the beta-lactam ring. Has penicillin- and cephalosporin-hydrolyzing activities. In Escherichia coli, this protein is Beta-lactamase OXA-1.